The following is a 430-amino-acid chain: Adenylosuccinate synthetase (430 aa).

GTP-binding positions include 12-18 (GDEGKGK) and 40-42 (GHT). The Proton acceptor role is filled by Asp-13. Residues Asp-13 and Gly-40 each coordinate Mg(2+). IMP contacts are provided by residues 13–16 (DEGK), 38–41 (NAGH), Thr-128, Arg-142, Gln-223, Thr-238, and Arg-302. His-41 serves as the catalytic Proton donor. Position 298–304 (298–304 (TTTGRPR)) interacts with substrate. Residues Arg-304, 330 to 332 (SID), and 413 to 415 (SVG) contribute to the GTP site.

The protein belongs to the adenylosuccinate synthetase family. As to quaternary structure, homodimer. Mg(2+) serves as cofactor.

Its subcellular location is the cytoplasm. It catalyses the reaction IMP + L-aspartate + GTP = N(6)-(1,2-dicarboxyethyl)-AMP + GDP + phosphate + 2 H(+). It functions in the pathway purine metabolism; AMP biosynthesis via de novo pathway; AMP from IMP: step 1/2. Plays an important role in the de novo pathway of purine nucleotide biosynthesis. Catalyzes the first committed step in the biosynthesis of AMP from IMP. The sequence is that of Adenylosuccinate synthetase from Lactococcus lactis subsp. cremoris (strain SK11).